The chain runs to 343 residues: Putative adenosine/adenine deaminase (343 aa).

Residues His-16, His-18, and His-204 each contribute to the Zn(2+) site. Position 18 (His-18) interacts with substrate. Glu-207 acts as the Proton donor in catalysis. Asp-285 provides a ligand contact to Zn(2+). Residue Asp-286 coordinates substrate.

This sequence belongs to the metallo-dependent hydrolases superfamily. Adenosine and AMP deaminases family. Zn(2+) serves as cofactor.

Functionally, putative nucleoside deaminase. May catalyze the hydrolytic deamination of adenosine or some similar substrate and play a role in purine metabolism. The chain is Putative adenosine/adenine deaminase from Streptomyces coelicolor (strain ATCC BAA-471 / A3(2) / M145).